The primary structure comprises 315 residues: Aspartate carbamoyltransferase catalytic subunit (315 aa).

2 residues coordinate carbamoyl phosphate: Arg-65 and Thr-66. L-aspartate is bound at residue Lys-93. Carbamoyl phosphate is bound by residues Arg-115, His-145, and Gln-148. 2 residues coordinate L-aspartate: Arg-179 and Arg-234. 2 residues coordinate carbamoyl phosphate: Gly-275 and Pro-276.

This sequence belongs to the aspartate/ornithine carbamoyltransferase superfamily. ATCase family. As to quaternary structure, heterododecamer (2C3:3R2) of six catalytic PyrB chains organized as two trimers (C3), and six regulatory PyrI chains organized as three dimers (R2).

The catalysed reaction is carbamoyl phosphate + L-aspartate = N-carbamoyl-L-aspartate + phosphate + H(+). It functions in the pathway pyrimidine metabolism; UMP biosynthesis via de novo pathway; (S)-dihydroorotate from bicarbonate: step 2/3. Functionally, catalyzes the condensation of carbamoyl phosphate and aspartate to form carbamoyl aspartate and inorganic phosphate, the committed step in the de novo pyrimidine nucleotide biosynthesis pathway. The polypeptide is Aspartate carbamoyltransferase catalytic subunit (Xanthomonas oryzae pv. oryzae (strain MAFF 311018)).